The sequence spans 537 residues: 2-succinyl-5-enolpyruvyl-6-hydroxy-3-cyclohexene-1-carboxylate synthase (537 aa).

The protein belongs to the TPP enzyme family. MenD subfamily. As to quaternary structure, homodimer. It depends on Mg(2+) as a cofactor. Mn(2+) is required as a cofactor. Requires thiamine diphosphate as cofactor.

It catalyses the reaction isochorismate + 2-oxoglutarate + H(+) = 5-enolpyruvoyl-6-hydroxy-2-succinyl-cyclohex-3-ene-1-carboxylate + CO2. It participates in quinol/quinone metabolism; 1,4-dihydroxy-2-naphthoate biosynthesis; 1,4-dihydroxy-2-naphthoate from chorismate: step 2/7. The protein operates within quinol/quinone metabolism; menaquinone biosynthesis. In terms of biological role, catalyzes the thiamine diphosphate-dependent decarboxylation of 2-oxoglutarate and the subsequent addition of the resulting succinic semialdehyde-thiamine pyrophosphate anion to isochorismate to yield 2-succinyl-5-enolpyruvyl-6-hydroxy-3-cyclohexene-1-carboxylate (SEPHCHC). The chain is 2-succinyl-5-enolpyruvyl-6-hydroxy-3-cyclohexene-1-carboxylate synthase from Rhodococcus erythropolis (strain PR4 / NBRC 100887).